The primary structure comprises 497 residues: Pancreatic alpha-amylase (497 aa).

Glutamine 1 bears the Pyrrolidone carboxylic acid mark. Disulfide bonds link cysteine 28–cysteine 86, cysteine 70–cysteine 115, and cysteine 141–cysteine 160. Ca(2+) is bound by residues asparagine 100, arginine 158, and aspartate 167. Chloride is bound at residue arginine 195. Aspartate 197 serves as the catalytic Nucleophile. Histidine 201 is a Ca(2+) binding site. Residue glutamate 233 is the Proton donor of the active site. Residues asparagine 298 and arginine 337 each contribute to the chloride site. 2 disulfides stabilise this stretch: cysteine 379-cysteine 385 and cysteine 451-cysteine 463.

Belongs to the glycosyl hydrolase 13 family. Monomer. Requires Ca(2+) as cofactor. Chloride is required as a cofactor.

The protein localises to the secreted. Its subcellular location is the extracellular space. It catalyses the reaction Endohydrolysis of (1-&gt;4)-alpha-D-glucosidic linkages in polysaccharides containing three or more (1-&gt;4)-alpha-linked D-glucose units.. The protein is Pancreatic alpha-amylase of Struthio camelus (Common ostrich).